We begin with the raw amino-acid sequence, 287 residues long: Glucose import system permease protein GlcU (287 aa).

A run of 7 helical transmembrane segments spans residues His14–Ile34, Ile76–Phe96, Val113–Leu133, Ile149–Ile169, Ile194–Ala214, Phe218–Leu238, and Asp250–Gly270. Residues Leu71 to Leu269 enclose the ABC transmembrane type-1 domain.

Belongs to the binding-protein-dependent transport system permease family. As to quaternary structure, the complex is composed of two ATP-binding proteins (GlcV), two transmembrane proteins (GlcT and GlcU) and a solute-binding protein (GlcS).

It localises to the cell membrane. Part of the ABC transporter complex GlcSTUV involved in glucose uptake. Responsible for the translocation of the substrate across the membrane. This Saccharolobus solfataricus (strain ATCC 35092 / DSM 1617 / JCM 11322 / P2) (Sulfolobus solfataricus) protein is Glucose import system permease protein GlcU.